Consider the following 155-residue polypeptide: UPF0178 protein mlr0875 (155 aa).

The protein belongs to the UPF0178 family.

The chain is UPF0178 protein mlr0875 from Mesorhizobium japonicum (strain LMG 29417 / CECT 9101 / MAFF 303099) (Mesorhizobium loti (strain MAFF 303099)).